A 132-amino-acid chain; its full sequence is Small ribosomal subunit protein eS12 (132 aa).

It belongs to the eukaryotic ribosomal protein eS12 family.

The polypeptide is Small ribosomal subunit protein eS12 (rps12) (Oreochromis niloticus (Nile tilapia)).